The following is a 77-amino-acid chain: UPF0213 protein VNG_2274C (77 aa).

Residues 1–75 enclose the GIY-YIG domain; that stretch reads MHHVYVIECS…KQLSRAQKEA (75 aa).

This sequence belongs to the UPF0213 family.

This chain is UPF0213 protein VNG_2274C, found in Halobacterium salinarum (strain ATCC 700922 / JCM 11081 / NRC-1) (Halobacterium halobium).